The following is a 576-amino-acid chain: 4-alpha-glucanotransferase, chloroplastic/amyloplastic (576 aa).

Residues 1–52 constitute a chloroplast transit peptide; sequence MAIHTCFSLIPSSFSSPKLPYPKNTTFQSPIPKLSRPTFMFDRKGSFQNGTA.

Belongs to the disproportionating enzyme family. Present in leaves, stems, roots, and stolons but is most abundant in developing and mature tubers.

Its subcellular location is the plastid. It is found in the chloroplast. The protein resides in the amyloplast. It carries out the reaction Transfers a segment of a (1-&gt;4)-alpha-D-glucan to a new position in an acceptor, which may be glucose or a (1-&gt;4)-alpha-D-glucan.. May act during starch breakdown to convert small oligosaccharides into larger molecules upon which starch phosphorylase can act, or may change the structure of starch molecules and grain architecture by modifying chain length, or may generate from starch and glucose oligosaccharides which can serve either as primers for new starch phosphoenzyme. The chain is 4-alpha-glucanotransferase, chloroplastic/amyloplastic (DPEP) from Solanum tuberosum (Potato).